A 549-amino-acid chain; its full sequence is Membrane protein insertase YidC (549 aa).

A helical transmembrane segment spans residues 6-26 (NLLLIGLLLVSFMLWQSWMVD). The segment at 35–55 (ATAESSVPASSGGDVPNQNDA) is disordered. The next 4 membrane-spanning stretches (helical) occupy residues 349–369 (QFLHGLVGNWGVAIILITMIV), 424–444 (LGGCFPLLIQMPIFIALYWTL), 462–482 (LSVKDPYYVLPLLMGATMWYI), and 503–523 (PIVFTFMFLWFPSGLTLYWVV).

The protein belongs to the OXA1/ALB3/YidC family. Type 1 subfamily. Interacts with the Sec translocase complex via SecD. Specifically interacts with transmembrane segments of nascent integral membrane proteins during membrane integration.

It is found in the cell inner membrane. Its function is as follows. Required for the insertion and/or proper folding and/or complex formation of integral membrane proteins into the membrane. Involved in integration of membrane proteins that insert both dependently and independently of the Sec translocase complex, as well as at least some lipoproteins. Aids folding of multispanning membrane proteins. This is Membrane protein insertase YidC from Tolumonas auensis (strain DSM 9187 / NBRC 110442 / TA 4).